The sequence spans 267 residues: L-aspartate dehydrogenase (267 aa).

2 residues coordinate NAD(+): Ala124 and Asn190. His220 is an active-site residue.

This sequence belongs to the L-aspartate dehydrogenase family.

It catalyses the reaction L-aspartate + NADP(+) + H2O = oxaloacetate + NH4(+) + NADPH + H(+). The catalysed reaction is L-aspartate + NAD(+) + H2O = oxaloacetate + NH4(+) + NADH + H(+). It functions in the pathway cofactor biosynthesis; NAD(+) biosynthesis; iminoaspartate from L-aspartate (dehydrogenase route): step 1/1. Specifically catalyzes the NAD or NADP-dependent dehydrogenation of L-aspartate to iminoaspartate. The protein is L-aspartate dehydrogenase of Polaromonas sp. (strain JS666 / ATCC BAA-500).